We begin with the raw amino-acid sequence, 303 residues long: Sterol-4-alpha-carboxylate 3-dehydrogenase ERG26, decarboxylating (303 aa).

NADP(+) contacts are provided by residues 8 to 9 (SL) and 30 to 32 (TAS). A substrate-binding site is contributed by Ser-71. The interval 77–96 (PTQEPTSEENAHRYDENNAP) is disordered. NADP(+) contacts are provided by residues Tyr-102, Lys-106, and 128 to 131 (IPGI). Tyr-102 is a binding site for substrate. Lys-106 acts as the Proton donor in catalysis.

It belongs to the 3-beta-HSD family. In terms of assembly, heterotetramer of ERG25, ERG26, ERG27 and ERG28. ERG28 acts as a scaffold to tether ERG27 and other 4,4-demethylation-related enzymes, forming a demethylation enzyme complex, in the endoplasmic reticulum.

It localises to the endoplasmic reticulum membrane. It functions in the pathway steroid metabolism; ergosterol biosynthesis. In terms of biological role, sterol-4-alpha-carboxylate 3-dehydrogenase; part of the third module of ergosterol biosynthesis pathway that includes the late steps of the pathway. ERG26 is a catalytic component of the C-4 demethylation complex that catalyzes the conversion of 4,4-dimethylfecosterol into fecosterol via 4-methylfecosterol. The third module or late pathway involves the ergosterol synthesis itself through consecutive reactions that mainly occur in the endoplasmic reticulum (ER) membrane. Firstly, the squalene synthase ERG9 catalyzes the condensation of 2 farnesyl pyrophosphate moieties to form squalene, which is the precursor of all steroids. Squalene synthase is crucial for balancing the incorporation of farnesyl diphosphate (FPP) into sterol and nonsterol isoprene synthesis. Secondly, squalene is converted into lanosterol by the consecutive action of the squalene epoxidase ERG1 and the lanosterol synthase ERG7. Then, the delta(24)-sterol C-methyltransferase ERG6 methylates lanosterol at C-24 to produce eburicol. Eburicol is the substrate of the sterol 14-alpha demethylase encoded by CYP51A, CYP51B and CYP51C, to yield 4,4,24-trimethyl ergosta-8,14,24(28)-trienol. CYP51B encodes the enzyme primarily responsible for sterol 14-alpha-demethylation, and plays an essential role in ascospore formation. CYP51A encodes an additional sterol 14-alpha-demethylase, induced on ergosterol depletion and responsible for the intrinsic variation in azole sensitivity. The third CYP51 isoform, CYP51C, does not encode a sterol 14-alpha-demethylase, but is required for full virulence on host wheat ears. The C-14 reductase ERG24 then reduces the C14=C15 double bond which leads to 4,4-dimethylfecosterol. A sequence of further demethylations at C-4, involving the C-4 demethylation complex containing the C-4 methylsterol oxidases ERG25, the sterol-4-alpha-carboxylate 3-dehydrogenase ERG26 and the 3-keto-steroid reductase ERG27, leads to the production of fecosterol via 4-methylfecosterol. ERG28 has a role as a scaffold to help anchor ERG25, ERG26 and ERG27 to the endoplasmic reticulum. The C-8 sterol isomerase ERG2 then catalyzes the reaction which results in unsaturation at C-7 in the B ring of sterols and thus converts fecosterol to episterol. The sterol-C5-desaturases ERG3A and ERG3BB then catalyze the introduction of a C-5 double bond in the B ring to produce 5-dehydroepisterol. The C-22 sterol desaturases ERG5A and ERG5B further convert 5-dehydroepisterol into ergosta-5,7,22,24(28)-tetraen-3beta-ol by forming the C-22(23) double bond in the sterol side chain. Finally, ergosta-5,7,22,24(28)-tetraen-3beta-ol is substrate of the C-24(28) sterol reductase ERG4 to produce ergosterol. The chain is Sterol-4-alpha-carboxylate 3-dehydrogenase ERG26, decarboxylating from Gibberella zeae (strain ATCC MYA-4620 / CBS 123657 / FGSC 9075 / NRRL 31084 / PH-1) (Wheat head blight fungus).